Here is a 556-residue protein sequence, read N- to C-terminus: Dihydroxy-acid dehydratase (556 aa).

C47 is a [2Fe-2S] cluster binding site. D79 contacts Mg(2+). Position 120 (C120) interacts with [2Fe-2S] cluster. 2 residues coordinate Mg(2+): D121 and K122. The residue at position 122 (K122) is an N6-carboxylysine. C192 is a binding site for [2Fe-2S] cluster. E444 serves as a coordination point for Mg(2+). The active-site Proton acceptor is S470.

The protein belongs to the IlvD/Edd family. In terms of assembly, homodimer. It depends on [2Fe-2S] cluster as a cofactor. Mg(2+) serves as cofactor.

It catalyses the reaction (2R)-2,3-dihydroxy-3-methylbutanoate = 3-methyl-2-oxobutanoate + H2O. It carries out the reaction (2R,3R)-2,3-dihydroxy-3-methylpentanoate = (S)-3-methyl-2-oxopentanoate + H2O. It functions in the pathway amino-acid biosynthesis; L-isoleucine biosynthesis; L-isoleucine from 2-oxobutanoate: step 3/4. It participates in amino-acid biosynthesis; L-valine biosynthesis; L-valine from pyruvate: step 3/4. Functions in the biosynthesis of branched-chain amino acids. Catalyzes the dehydration of (2R,3R)-2,3-dihydroxy-3-methylpentanoate (2,3-dihydroxy-3-methylvalerate) into 2-oxo-3-methylpentanoate (2-oxo-3-methylvalerate) and of (2R)-2,3-dihydroxy-3-methylbutanoate (2,3-dihydroxyisovalerate) into 2-oxo-3-methylbutanoate (2-oxoisovalerate), the penultimate precursor to L-isoleucine and L-valine, respectively. The sequence is that of Dihydroxy-acid dehydratase from Prochlorococcus marinus (strain NATL2A).